The following is a 296-amino-acid chain: uncharacterized protein (296 aa).

A helical transmembrane segment spans residues 7 to 26 (CFSLVCALGASTYLLWRGWL).

It localises to the membrane. This is an uncharacterized protein from Treponema pallidum (strain Nichols).